The chain runs to 467 residues: Ammonium transporter Rh type C (467 aa).

Residues 1 to 3 (MRL) lie on the Cytoplasmic side of the membrane. The helical transmembrane segment at 4 to 24 (RLPVVCFLWEIAMIVLFGIFV) threads the bilayer. At 25-55 (RYNDEADPHWSEFMKAQNITSDIQNDYYFRY) the chain is on the extracellular side. N-linked (GlcNAc...) asparagine glycosylation is present at Asn42. The helical transmembrane segment at 56–76 (PSFQDVHVMIFVGFGFLMTFL) threads the bilayer. Residues 77–80 (KRYG) are Cytoplasmic-facing. The chain crosses the membrane as a helical span at residues 81–101 (FGSVAFNFLLAAFGIQWAILM). Residues 102–119 (QGWFHTFKNGKILIGVES) are Extracellular-facing. The helical transmembrane segment at 120-139 (LINADFCVGSVCIAFGAILG) threads the bilayer. Residues 140-145 (KVSPVQ) lie on the Cytoplasmic side of the membrane. Residues 146–168 (IMVMTLFQVTLFAVNEWILLNLL) form a helical membrane-spanning segment. The Extracellular segment spans residues 169-173 (HVNDA). Residues 174-194 (GGSMTIHTFGAYFGLTVAWIL) traverse the membrane as a helical segment. The Cytoplasmic portion of the chain corresponds to 195-213 (NRPRLKQTNDKEGSVYVSD). Residues 214–234 (LFSMIGTLFLWMFWPSFNSAV) traverse the membrane as a helical segment. Topologically, residues 235–245 (SYHGDAQHRAA) are extracellular. Residues 246-266 (INTYCSLAACVLTTVAISSVV) form a helical membrane-spanning segment. Topologically, residues 267–271 (NKKGK) are cytoplasmic. Residues 272 to 292 (LEMVHIQNATLAGGVAVGTAA) traverse the membrane as a helical segment. Over 293-295 (EMM) the chain is Extracellular. The helical transmembrane segment at 296–316 (LTPYGSLIVGFICGIVSTLGF) threads the bilayer. Topologically, residues 317-337 (TYCSPFLSNKLRLHDTCGIHN) are cytoplasmic. Residues 338 to 358 (LHAMPGLIGGIVGAVTAACAT) form a helical membrane-spanning segment. Residues 359–390 (EAVYTADGLKKMFRFEGDYATRTPSMQGGYQA) lie on the Extracellular side of the membrane. Residues 391–411 (AGLCVSLAFGLVGGTVVGCIL) form a helical membrane-spanning segment. Topologically, residues 412 to 467 (KLPIWGDPSDENCFDDEVYWELPEEDEEEHLGAANQYVTHLPENFKLPDRTEVAFK) are cytoplasmic.

Belongs to the ammonium transporter (TC 2.A.49) family. Rh subfamily. Homotrimer.

It is found in the apical cell membrane. Functions as an ammonia transporter. The sequence is that of Ammonium transporter Rh type C (rhcg) from Xenopus tropicalis (Western clawed frog).